Reading from the N-terminus, the 534-residue chain is UDP-glucuronosyltransferase 1A5 (534 aa).

Residues 1 to 28 form the signal peptide; the sequence is MATGLQVPLPQLATGLLLLLSVQPWAES. Asn119, Asn296, and Asn348 each carry an N-linked (GlcNAc...) asparagine glycan. The helical transmembrane segment at 492 to 508 threads the bilayer; it reads VIGFLLAVVLTVAFITF.

Belongs to the UDP-glycosyltransferase family. In terms of assembly, homodimer. Homooligomer. Interacts with UGT1A1, UGT1A3, UGT1A4, UGT1A6, UGT1A7, UGT1A8, UGT1A9 and UGT1A10 to form heterodimers. Isoform 1 interacts with isoform 2/i2 suggesting that oligomerization is involved in negative regulation of transferase activity by isoform 2. Isoform 1 also interacts with respective i2 isoforms of UGT1A1, UGT1A3, UGT1A4, UGT1A6, UGT1A7, UGT1A8, UGT1A9 and UGT1A10. As to expression, isoform 1 and isoform 2 are expressed in colon and small intestine. Neither isoform is expressed in liver, kidney or esophagus.

It localises to the endoplasmic reticulum membrane. The catalysed reaction is glucuronate acceptor + UDP-alpha-D-glucuronate = acceptor beta-D-glucuronoside + UDP + H(+). The enzyme catalyses zolasartan + UDP-alpha-D-glucuronate = zolarsartan-1-N-beta-D-glucuronide + UDP. Functionally, UDP-glucuronosyltransferase (UGT) that catalyzes phase II biotransformation reactions in which lipophilic substrates are conjugated with glucuronic acid to increase the metabolite's water solubility, thereby facilitating excretion into either the urine or bile. Essential for the elimination and detoxification of drugs, xenobiotics and endogenous compounds. Involved in the glucuronidation of the AGTR1 angiotensin receptor antagonist zolarsatan, a drug which can inhibit the effect of angiotensin II. Its function is as follows. Lacks UGT glucuronidation activity but acts as a negative regulator of isoform 1. The polypeptide is UDP-glucuronosyltransferase 1A5 (Homo sapiens (Human)).